The primary structure comprises 564 residues: 4-coumarate--CoA ligase 1 (564 aa).

Ser-209, Ser-210, Gly-211, Thr-212, Thr-213, and Lys-217 together coordinate ATP. The (E)-4-coumaroyl-AMP site is built by Tyr-259 and Thr-263. Arg-280 contacts CoA. Positions 282–351 are SBD1; it reads DLAAMMDLVE…AKLPGAVLGQ (70 aa). Positions 329, 351, 352, 356, and 364 each coordinate (E)-4-coumaroyl-AMP. Residues Gln-351, Gly-352, and Thr-356 each coordinate ATP. Residues 352 to 419 form an SBD2 region; sequence GYGMTEAGPV…IRGQQIMKGY (68 aa). ATP is bound by residues Asp-440 and Arg-455. (E)-4-coumaroyl-AMP-binding residues include Lys-457 and Lys-461. The CoA site is built by Arg-463 and Gly-464. Lys-547 is a binding site for ATP.

It belongs to the ATP-dependent AMP-binding enzyme family. Mg(2+) is required as a cofactor. Expressed in roots, stems, leaf blades and leaf sheaths.

It catalyses the reaction (E)-ferulate + ATP + CoA = (E)-feruloyl-CoA + AMP + diphosphate. The catalysed reaction is (E)-4-coumarate + ATP + CoA = (E)-4-coumaroyl-CoA + AMP + diphosphate. It carries out the reaction (E)-cinnamate + ATP + CoA = (E)-cinnamoyl-CoA + AMP + diphosphate. The enzyme catalyses (E)-caffeate + ATP + CoA = (E)-caffeoyl-CoA + AMP + diphosphate. It catalyses the reaction (E)-ferulate + ATP + H(+) = (E)-feruloyl-AMP + diphosphate. The catalysed reaction is (E)-feruloyl-AMP + CoA = (E)-feruloyl-CoA + AMP + H(+). It carries out the reaction (E)-4-coumarate + ATP + H(+) = (E)-4-coumaroyl-AMP + diphosphate. The enzyme catalyses (E)-4-coumaroyl-AMP + CoA = (E)-4-coumaroyl-CoA + AMP + H(+). It catalyses the reaction (E)-caffeate + ATP + H(+) = (E)-caffeoyl-AMP + diphosphate. The catalysed reaction is (E)-caffeoyl-AMP + CoA = (E)-caffeoyl-CoA + AMP + H(+). Its pathway is phytoalexin biosynthesis; 3,4',5-trihydroxystilbene biosynthesis; 3,4',5-trihydroxystilbene from trans-4-coumarate: step 1/2. Its function is as follows. Involved in the phenylpropanoid metabolism by mediating the activation of a number of hydroxycinnamates for the biosynthesis of monolignols and other phenolic secondary metabolites. Catalyzes the formation of CoA esters of cinnamate, 4-coumarate, caffeate and ferulate. Is more efficient with substrates in the following order: ferulate &gt; 4-coumarate &gt; cinnamate &gt; caffeate. Cannot convert sinapate to its corresponding CoA ester. Follows a two-step reaction mechanism, wherein the carboxylate substrate first undergoes adenylation by ATP, followed by a thioesterification in the presence of CoA to yield the final CoA thioester. The chain is 4-coumarate--CoA ligase 1 from Oryza sativa subsp. japonica (Rice).